Here is a 451-residue protein sequence, read N- to C-terminus: Histidinol dehydrogenase (451 aa).

Positions M1–A20 are disordered. A compositionally biased stretch (basic and acidic residues) spans L7–R19. The NAD(+) site is built by Y129, Q193, and N218. Substrate contacts are provided by T241, Q263, and H266. Zn(2+) is bound by residues Q263 and H266. Active-site proton acceptor residues include E332 and H333. 4 residues coordinate substrate: H333, D366, E420, and H425. Position 366 (D366) interacts with Zn(2+). Residue H425 coordinates Zn(2+).

It belongs to the histidinol dehydrogenase family. Zn(2+) is required as a cofactor.

The catalysed reaction is L-histidinol + 2 NAD(+) + H2O = L-histidine + 2 NADH + 3 H(+). Its pathway is amino-acid biosynthesis; L-histidine biosynthesis; L-histidine from 5-phospho-alpha-D-ribose 1-diphosphate: step 9/9. Catalyzes the sequential NAD-dependent oxidations of L-histidinol to L-histidinaldehyde and then to L-histidine. The sequence is that of Histidinol dehydrogenase from Corynebacterium efficiens (strain DSM 44549 / YS-314 / AJ 12310 / JCM 11189 / NBRC 100395).